The chain runs to 116 residues: Large ribosomal subunit protein uL18 (116 aa).

The protein belongs to the universal ribosomal protein uL18 family. In terms of assembly, part of the 50S ribosomal subunit; part of the 5S rRNA/L5/L18/L25 subcomplex. Contacts the 5S and 23S rRNAs.

In terms of biological role, this is one of the proteins that bind and probably mediate the attachment of the 5S RNA into the large ribosomal subunit, where it forms part of the central protuberance. The polypeptide is Large ribosomal subunit protein uL18 (Ectopseudomonas mendocina (strain ymp) (Pseudomonas mendocina)).